Reading from the N-terminus, the 186-residue chain is Ribosome-recycling factor (186 aa).

It belongs to the RRF family.

It localises to the cytoplasm. Responsible for the release of ribosomes from messenger RNA at the termination of protein biosynthesis. May increase the efficiency of translation by recycling ribosomes from one round of translation to another. This chain is Ribosome-recycling factor, found in Cytophaga hutchinsonii (strain ATCC 33406 / DSM 1761 / CIP 103989 / NBRC 15051 / NCIMB 9469 / D465).